The following is a 474-amino-acid chain: tRNA-2-methylthio-N(6)-dimethylallyladenosine synthase (474 aa).

The MTTase N-terminal domain occupies 3–120 (KKLHIKTWGC…LPEMINHVQG (118 aa)). The [4Fe-4S] cluster site is built by cysteine 12, cysteine 49, cysteine 83, cysteine 157, cysteine 161, and cysteine 164. Residues 143–375 (RADGPTAFVS…QDRITKQAMR (233 aa)) enclose the Radical SAM core domain. The 64-residue stretch at 378 to 441 (RLMLGTVQRI…TNSLRGIVVR (64 aa)) folds into the TRAM domain.

It belongs to the methylthiotransferase family. MiaB subfamily. As to quaternary structure, monomer. The cofactor is [4Fe-4S] cluster.

It is found in the cytoplasm. The catalysed reaction is N(6)-dimethylallyladenosine(37) in tRNA + (sulfur carrier)-SH + AH2 + 2 S-adenosyl-L-methionine = 2-methylsulfanyl-N(6)-dimethylallyladenosine(37) in tRNA + (sulfur carrier)-H + 5'-deoxyadenosine + L-methionine + A + S-adenosyl-L-homocysteine + 2 H(+). In terms of biological role, catalyzes the methylthiolation of N6-(dimethylallyl)adenosine (i(6)A), leading to the formation of 2-methylthio-N6-(dimethylallyl)adenosine (ms(2)i(6)A) at position 37 in tRNAs that read codons beginning with uridine. The protein is tRNA-2-methylthio-N(6)-dimethylallyladenosine synthase of Pectobacterium atrosepticum (strain SCRI 1043 / ATCC BAA-672) (Erwinia carotovora subsp. atroseptica).